A 616-amino-acid chain; its full sequence is Replication protein A 70 kDa DNA-binding subunit (616 aa).

M1 is subject to N-acetylmethionine. Residues K22 and K88 each participate in a glycyl lysine isopeptide (Lys-Gly) (interchain with G-Cter in ubiquitin) cross-link. The tract at residues 121–154 (GLGQPQVAPPAPAASPAASSRPQPQNGSSGMGST) is disordered. Low complexity predominate over residues 134–145 (ASPAASSRPQPQ). Residues K163 and K167 each carry the N6-acetyllysine; alternate modification. Residues K163 and K167 each participate in a glycyl lysine isopeptide (Lys-Gly) (interchain with G-Cter in ubiquitin); alternate cross-link. T180 bears the Phosphothreonine mark. K183 is covalently cross-linked (Glycyl lysine isopeptide (Lys-Gly) (interchain with G-Cter in ubiquitin)). Phosphothreonine is present on T191. Residues 197 to 281 (WTICARVTNK…VKNDYEMTFN (85 aa)) constitute a DNA-binding region (OB). Residues K220 and K244 each participate in a glycyl lysine isopeptide (Lys-Gly) (interchain with G-Cter in ubiquitin) cross-link. K259 is subject to N6-acetyllysine; alternate. K259 participates in a covalent cross-link: Glycyl lysine isopeptide (Lys-Gly) (interchain with G-Cter in ubiquitin); alternate. Glycyl lysine isopeptide (Lys-Gly) (interchain with G-Cter in ubiquitin) cross-links involve residues K267 and K331. S384 is subject to Phosphoserine. Glycyl lysine isopeptide (Lys-Gly) (interchain with G-Cter in ubiquitin) cross-links involve residues K410 and K431. A Glycyl lysine isopeptide (Lys-Gly) (interchain with G-Cter in SUMO) cross-link involves residue K449. K458 participates in a covalent cross-link: Glycyl lysine isopeptide (Lys-Gly) (interchain with G-Cter in ubiquitin). The C4-type zinc-finger motif lies at 481-503 (CPTQDCNKKVIDQQNGLYRCEKC). Residue K553 forms a Glycyl lysine isopeptide (Lys-Gly) (interchain with G-Cter in ubiquitin) linkage. K577 is covalently cross-linked (Glycyl lysine isopeptide (Lys-Gly) (interchain with G-Cter in SUMO)).

This sequence belongs to the replication factor A protein 1 family. Component of the canonical replication protein A complex (RPA), a heterotrimer composed of RPA1, RPA2 and RPA3. Also a component of the aRPA, the alternative replication protein A complex, a trimeric complex similar to the replication protein A complex/RPA but where RPA1 and RPA3 are associated with RPA4 instead of RPA2. The DNA-binding activity may reside exclusively on the RPA1 subunit. Interacts with PRPF19; the PRP19-CDC5L complex is recruited to the sites of DNA repair where it ubiquitinates the replication protein A complex (RPA). Interacts with RIPK1. Interacts with the polymerase alpha subunit POLA1/p180; this interaction stabilizes the replicative complex and reduces the misincorporation rate of DNA polymerase alpha by acting as a fidelity clamp. Interacts with RAD51 and SENP6 to regulate DNA repair. Interacts with HELB; this interaction promotes HELB recruitment to chromatin following DNA damage. Interacts with PRIMPOL; leading to recruit PRIMPOL on chromatin and stimulate its DNA primase activity. Interacts with XPA; the interaction is direct and associates XPA with the RPA complex. Interacts with ETAA1; the interaction is direct and promotes ETAA1 recruitment at stalled replication forks. Interacts with RPA1; this interaction associates HROB with the RPA complex. Interacts (when poly-ADP-ribosylated) with HTATSF1. Interacts with BRIP1/FANCJ via this RPA1 subunit; following DNA damage they colocalize in foci in the nucleus. Post-translationally, DNA damage-induced 'Lys-63'-linked polyubiquitination by PRPF19 mediates ATRIP recruitment to the RPA complex at sites of DNA damage and activation of ATR. Ubiquitinated by RFWD3 at stalled replication forks in response to DNA damage: ubiquitination by RFWD3 does not lead to degradation by the proteasome and promotes removal of the RPA complex from stalled replication forks, promoting homologous recombination. In terms of processing, sumoylated on lysine residues Lys-449 and Lys-577, with Lys-449 being the major site. Sumoylation promotes recruitment of RAD51 to the DNA damage foci to initiate DNA repair through homologous recombination. Desumoylated by SENP6. Poly-ADP-ribosylated by PARP1; promoting recruitment of HTATSF1.

The protein localises to the nucleus. It is found in the PML body. As part of the heterotrimeric replication protein A complex (RPA/RP-A), binds and stabilizes single-stranded DNA intermediates that form during DNA replication or upon DNA stress. It prevents their reannealing and in parallel, recruits and activates different proteins and complexes involved in DNA metabolism. Thereby, it plays an essential role both in DNA replication and the cellular response to DNA damage. In the cellular response to DNA damage, the RPA complex controls DNA repair and DNA damage checkpoint activation. Through recruitment of ATRIP activates the ATR kinase a master regulator of the DNA damage response. It is required for the recruitment of the DNA double-strand break repair factors RAD51 and RAD52 to chromatin in response to DNA damage. Also recruits to sites of DNA damage proteins like XPA and XPG that are involved in nucleotide excision repair and is required for this mechanism of DNA repair. Also plays a role in base excision repair (BER) probably through interaction with UNG. Also recruits SMARCAL1/HARP, which is involved in replication fork restart, to sites of DNA damage. Plays a role in telomere maintenance. As part of the alternative replication protein A complex, aRPA, binds single-stranded DNA and probably plays a role in DNA repair. Compared to the RPA2-containing, canonical RPA complex, may not support chromosomal DNA replication and cell cycle progression through S-phase. The aRPA may not promote efficient priming by DNA polymerase alpha but could support DNA synthesis by polymerase delta in presence of PCNA and replication factor C (RFC), the dual incision/excision reaction of nucleotide excision repair and RAD51-dependent strand exchange. RPA stimulates 5'-3' helicase activity of the BRIP1/FANCJ. The chain is Replication protein A 70 kDa DNA-binding subunit (RPA1) from Homo sapiens (Human).